Consider the following 221-residue polypeptide: Transcription factor bHLH148 (221 aa).

Disordered regions lie at residues 1–45 (MASL…GEIH) and 70–89 (LNSS…GKAV). Composition is skewed to low complexity over residues 26–41 (SASS…SSVS) and 72–82 (SSASTSSSPTA). Residues 148–197 (KRRVSVLRLNKKSIPDVNRKVRVLGRLVPGCGKQSVPVILEEATDYIQAL) form the bHLH domain.

As to quaternary structure, homodimer. Interacts with PRE3. Binds to RSA1.

It localises to the nucleus. Its function is as follows. bHLH transcription factor that binds DNA on specific sequence 5'-CANNTG-3' in target gene promoters. Negatively regulates brassinosteroid signaling. Together with BHLH148/RITF1, regulates the transcription of several genes involved in the detoxification of reactive oxygen species (ROS) generated by salt (NaCl) stress. Confers tolerance to salt and to the oxidative stress-inducing reagents hydrogen peroxide H(2)O(2) and methyl viologen (MV). This Arabidopsis thaliana (Mouse-ear cress) protein is Transcription factor bHLH148.